The following is a 268-amino-acid chain: Tryptophan synthase alpha chain (268 aa).

Residues E47 and D58 each act as proton acceptor in the active site.

This sequence belongs to the TrpA family. As to quaternary structure, tetramer of two alpha and two beta chains.

The catalysed reaction is (1S,2R)-1-C-(indol-3-yl)glycerol 3-phosphate + L-serine = D-glyceraldehyde 3-phosphate + L-tryptophan + H2O. The protein operates within amino-acid biosynthesis; L-tryptophan biosynthesis; L-tryptophan from chorismate: step 5/5. Its function is as follows. The alpha subunit is responsible for the aldol cleavage of indoleglycerol phosphate to indole and glyceraldehyde 3-phosphate. The sequence is that of Tryptophan synthase alpha chain from Chlorobium phaeobacteroides (strain BS1).